A 145-amino-acid polypeptide reads, in one-letter code: Succinate dehydrogenase assembly factor 2, mitochondrial (145 aa).

It belongs to the SDHAF2 family. In terms of assembly, interacts with the flavoprotein subunit within the SDH catalytic dimer.

It localises to the mitochondrion matrix. In terms of biological role, plays an essential role in the assembly of succinate dehydrogenase (SDH), an enzyme complex (also referred to as respiratory complex II) that is a component of both the tricarboxylic acid (TCA) cycle and the mitochondrial electron transport chain, and which couples the oxidation of succinate to fumarate with the reduction of ubiquinone (coenzyme Q) to ubiquinol. Required for flavinylation (covalent attachment of FAD) of the flavoprotein subunit of the SDH catalytic dimer. The protein is Succinate dehydrogenase assembly factor 2, mitochondrial of Yarrowia lipolytica (strain CLIB 122 / E 150) (Yeast).